A 152-amino-acid chain; its full sequence is Nucleoside diphosphate kinase A 1 (152 aa).

Lys12, Phe60, Arg88, Thr94, Arg105, and Asn115 together coordinate ATP. Residue His118 is the Pros-phosphohistidine intermediate of the active site.

The protein belongs to the NDK family. Homohexamer. Requires Mg(2+) as cofactor. The N-terminus is blocked.

It is found in the cytoplasm. Its subcellular location is the cell membrane. It localises to the nucleus. It carries out the reaction a 2'-deoxyribonucleoside 5'-diphosphate + ATP = a 2'-deoxyribonucleoside 5'-triphosphate + ADP. The catalysed reaction is a ribonucleoside 5'-diphosphate + ATP = a ribonucleoside 5'-triphosphate + ADP. With respect to regulation, autophosphorylation at His-118 increases serine/threonine protein kinase activity of the enzyme. Interaction with the SET complex inhibits exonuclease activity. In terms of biological role, major role in the synthesis of nucleoside triphosphates other than ATP. Possesses nucleoside-diphosphate kinase, serine/threonine-specific protein kinase, geranyl and farnesyl pyrophosphate kinase, histidine protein kinase and 3'-5' exonuclease activities. Involved in cell proliferation, differentiation and development, signal transduction, G protein-coupled receptor endocytosis, and gene expression. Required for neural development including neural patterning and cell fate determination. This chain is Nucleoside diphosphate kinase A 1 (NME1-1), found in Bos taurus (Bovine).